The following is a 278-amino-acid chain: NADPH-dependent 7-cyano-7-deazaguanine reductase (278 aa).

A substrate-binding site is contributed by 87–89 (IES). NADPH is bound at residue 89 to 90 (SK). Catalysis depends on C185, which acts as the Thioimide intermediate. Catalysis depends on D192, which acts as the Proton donor. Residue 224-225 (HE) participates in substrate binding. Residue 253–254 (RG) participates in NADPH binding. The interval 255–278 (GLDINPYRSTNPTFSVQNHRSFRQ) is disordered. Residues 261 to 278 (YRSTNPTFSVQNHRSFRQ) are compositionally biased toward polar residues.

This sequence belongs to the GTP cyclohydrolase I family. QueF type 2 subfamily. As to quaternary structure, homodimer.

The protein localises to the cytoplasm. It carries out the reaction 7-aminomethyl-7-carbaguanine + 2 NADP(+) = 7-cyano-7-deazaguanine + 2 NADPH + 3 H(+). It functions in the pathway tRNA modification; tRNA-queuosine biosynthesis. In terms of biological role, catalyzes the NADPH-dependent reduction of 7-cyano-7-deazaguanine (preQ0) to 7-aminomethyl-7-deazaguanine (preQ1). This is NADPH-dependent 7-cyano-7-deazaguanine reductase from Coxiella burnetii (strain Dugway 5J108-111).